We begin with the raw amino-acid sequence, 109 residues long: Large ribosomal subunit protein eL30 (109 aa).

This sequence belongs to the eukaryotic ribosomal protein eL30 family.

This chain is Large ribosomal subunit protein eL30, found in Methanopyrus kandleri (strain AV19 / DSM 6324 / JCM 9639 / NBRC 100938).